The chain runs to 542 residues: Phosphoacetylglucosamine mutase (542 aa).

An N-acetylmethionine modification is found at Met1. Phosphothreonine is present on Thr62. Catalysis depends on Ser64, which acts as the Phosphoserine intermediate. Mg(2+) contacts are provided by Ser64, Asp276, Asp278, and Asp280. A Phosphoserine modification is found at Ser64. Residues 370–372, 496–500, and Arg505 contribute to the substrate site; these read EAN and RPSGT.

This sequence belongs to the phosphohexose mutase family. Requires Mg(2+) as cofactor.

It carries out the reaction N-acetyl-alpha-D-glucosamine 1-phosphate = N-acetyl-D-glucosamine 6-phosphate. The protein operates within nucleotide-sugar biosynthesis; UDP-N-acetyl-alpha-D-glucosamine biosynthesis; N-acetyl-alpha-D-glucosamine 1-phosphate from alpha-D-glucosamine 6-phosphate (route I): step 2/2. Catalyzes the conversion of GlcNAc-6-P into GlcNAc-1-P during the synthesis of uridine diphosphate/UDP-GlcNAc, a sugar nucleotide critical to multiple glycosylation pathways including protein N- and O-glycosylation. The sequence is that of Phosphoacetylglucosamine mutase from Mus musculus (Mouse).